The primary structure comprises 299 residues: Taste receptor type 2 member 4 (299 aa).

Topologically, residues 1–9 (MLRLFYFSA) are extracellular. The helical transmembrane segment at 10–30 (IIASVILNFVGIIMNLFITVV) threads the bilayer. At 31–46 (NCKTWVKSHRISSSDR) the chain is on the cytoplasmic side. The helical transmembrane segment at 47–67 (ILFSLGITRFLMLGLFLVNTI) threads the bilayer. Over 68–81 (YFVSSNTERSVYLS) the chain is Extracellular. Residues 82–102 (AFFVLCFMFLDSSSLWFVTLL) traverse the membrane as a helical segment. Over 103–131 (NILYCVKITNFQHSVFLLLKRNISPKIPR) the chain is Cytoplasmic. Residues 132 to 152 (LLLACVLISAFTTCLYITLSQ) form a helical membrane-spanning segment. Over 153–172 (ASPFPELVTTRNNTSFNINE) the chain is Extracellular. Residues Asn-164 and Asn-165 are each glycosylated (N-linked (GlcNAc...) asparagine). The chain crosses the membrane as a helical span at residues 173-193 (GILSLVVSLVLSSSLQFIINV). Residues 194–230 (TSASLLIHSLRRHIQKMQKNATGFWNPQTEAHVGAMK) lie on the Cytoplasmic side of the membrane. The chain crosses the membrane as a helical span at residues 231–251 (LMVYFLILYIPYSVATLVQYL). Topologically, residues 252-262 (PFYAGMDMGTK) are extracellular. Residues 263–283 (SICLIFATLYSPGHSVLIIIT) traverse the membrane as a helical segment. At 284 to 299 (HPKLKTTAKKILCFKK) the chain is on the cytoplasmic side.

The protein belongs to the G-protein coupled receptor T2R family.

Its subcellular location is the membrane. It localises to the cell projection. The protein localises to the cilium membrane. Its function is as follows. Gustducin-coupled receptor implicated in the perception of bitter compounds in the oral cavity and the gastrointestinal tract. Signals through PLCB2 and the calcium-regulated cation channel TRPM5. In airway epithelial cells, binding of denatonium increases the intracellular calcium ion concentration and stimulates ciliary beat frequency. The protein is Taste receptor type 2 member 4 (TAS2R4) of Pan paniscus (Pygmy chimpanzee).